Consider the following 103-residue polypeptide: MSGRGKGGKGLGKGGAKRHRRVLRDNIQGITKPAIRRLARRGGVKRISGLIYEETRGVLKVFLENVIRDAVTYTEHAKRKTVTAMDVVYALKRQGRTLYGFGG.

Gly residues predominate over residues 1-14; sequence MSGRGKGGKGLGKG. The disordered stretch occupies residues 1-20; it reads MSGRGKGGKGLGKGGAKRHR. An N-acetylserine modification is found at serine 2. N6-acetyl-N6-methyllysine; alternate is present on residues lysine 6 and lysine 13. Lysine 17 is subject to N6-acetyllysine. A DNA-binding region spans residues 17–21; the sequence is KRHRR.

This sequence belongs to the histone H4 family. The nucleosome is a histone octamer containing two molecules each of H2A, H2B, H3 and H4 assembled in one H3-H4 heterotetramer and two H2A-H2B heterodimers. The octamer wraps approximately 147 bp of DNA.

The protein localises to the nucleus. The protein resides in the chromosome. Functionally, core component of nucleosome. Nucleosomes wrap and compact DNA into chromatin, limiting DNA accessibility to the cellular machineries which require DNA as a template. Histones thereby play a central role in transcription regulation, DNA repair, DNA replication and chromosomal stability. DNA accessibility is regulated via a complex set of post-translational modifications of histones, also called histone code, and nucleosome remodeling. The polypeptide is Histone H4 (Mytilus chilensis (Chilean blue mussel)).